A 155-amino-acid chain; its full sequence is MVWDATNIFLFAANILTVLYILYNDAVIPLWKGKTVLSVKLRSRGRWDGYIFVGIIVLLFVSNTFFREGPFSTSVLLGIMGVLFIYICFFRSSKAVFKESGLFYALLFFPYAKIERMNLSEDGVLVIETNRQRLMLFARSEKDLEKMLAVFTTYS.

The next 3 helical transmembrane spans lie at 8–28 (IFLFAANILTVLYILYNDAVI), 46–66 (RWDGYIFVGIIVLLFVSNTFF), and 70–90 (PFSTSVLLGIMGVLFIYICFF).

It belongs to the UPF0266 family.

Its subcellular location is the cell membrane. This is UPF0266 membrane protein LMHCC_1856 from Listeria monocytogenes serotype 4a (strain HCC23).